A 73-amino-acid polypeptide reads, in one-letter code: MIEVVCNDRLGKKVRVKCNTDDTIGDLKKLIAAQTGTRWNKIVLKKWYTIFKDHVSLGDYEIHDGMNLELYYQ.

The Ubiquitin-like domain occupies 1-73 (MIEVVCNDRL…DGMNLELYYQ (73 aa)).

Interacts with CLK1, CLK3 and CLK4. Interacts with coilin/COIL. Interacts with spliceosome components SART1 and EFTUD2. Interacts with FANCI; this interaction promotes FANCI dimerization.

The protein localises to the cytoplasm. It localises to the nucleus. Ubiquitin-like protein that plays a role in cell proliferation and sister chromatid cohesion by associating with spliceosomal proteins. Participates thereby in pre-mRNA splicing by maintaining spliceosome integrity. Promotes the functional integrity of the Fanconi anemia DNA repair pathway by interacting with FANCI component and subsequently mediating the formation of FANCI homodimers. Also plays a protective role against ER stress-induced apoptosis. This chain is Ubiquitin-like protein 5 (UBL5), found in Bos taurus (Bovine).